The primary structure comprises 437 residues: Ribosomal protein uS12 methylthiotransferase RimO (437 aa).

One can recognise an MTTase N-terminal domain in the interval 5–116 (PTISVSHLGC…IAEVIQRVET (112 aa)). Positions 14, 50, 79, 154, 158, and 161 each coordinate [4Fe-4S] cluster. The Radical SAM core domain maps to 140–369 (TTNEAVAYLR…MEIQQPIAAK (230 aa)). In terms of domain architecture, TRAM spans 372 to 437 (QKCVGQTVEV…DVYDLYGKVI (66 aa)).

The protein belongs to the methylthiotransferase family. RimO subfamily. Requires [4Fe-4S] cluster as cofactor.

The protein resides in the cytoplasm. The catalysed reaction is L-aspartate(89)-[ribosomal protein uS12]-hydrogen + (sulfur carrier)-SH + AH2 + 2 S-adenosyl-L-methionine = 3-methylsulfanyl-L-aspartate(89)-[ribosomal protein uS12]-hydrogen + (sulfur carrier)-H + 5'-deoxyadenosine + L-methionine + A + S-adenosyl-L-homocysteine + 2 H(+). Catalyzes the methylthiolation of an aspartic acid residue of ribosomal protein uS12. The protein is Ribosomal protein uS12 methylthiotransferase RimO of Crocosphaera subtropica (strain ATCC 51142 / BH68) (Cyanothece sp. (strain ATCC 51142)).